Here is a 393-residue protein sequence, read N- to C-terminus: Cysteine protease ATG4B (393 aa).

Catalysis depends on cysteine 73, which acts as the Nucleophile. Active-site residues include aspartate 278 and histidine 280. Positions 388–391 match the LIR motif; the sequence is FEIL.

The protein belongs to the peptidase C54 family.

Its subcellular location is the cytoplasm. It localises to the cytosol. It is found in the cytoplasmic vesicle. The protein localises to the autophagosome. The protein resides in the endoplasmic reticulum. Its subcellular location is the mitochondrion. The enzyme catalyses [protein]-C-terminal L-amino acid-glycyl-phosphatidylethanolamide + H2O = [protein]-C-terminal L-amino acid-glycine + a 1,2-diacyl-sn-glycero-3-phosphoethanolamine. The catalysed reaction is [protein]-C-terminal L-amino acid-glycyl-phosphatidylserine + H2O = [protein]-C-terminal L-amino acid-glycine + a 1,2-diacyl-sn-glycero-3-phospho-L-serine. Functionally, cysteine protease that plays a key role in autophagy by mediating both proteolytic activation and delipidation of ATG8 family proteins. Required for canonical autophagy (macroautophagy), non-canonical autophagy as well as for mitophagy. The protease activity is required for proteolytic activation of ATG8 family proteins: cleaves the C-terminal amino acid of ATG8 proteins to reveal a C-terminal glycine. Exposure of the glycine at the C-terminus is essential for ATG8 proteins conjugation to phosphatidylethanolamine (PE) and insertion to membranes, which is necessary for autophagy. Protease activity is also required to counteract formation of high-molecular weight conjugates of ATG8 proteins (ATG8ylation): acts as a deubiquitinating-like enzyme that removes ATG8 conjugated to other proteins, such as ATG3. In addition to the protease activity, also mediates delipidation of ATG8 family proteins. Catalyzes delipidation of PE-conjugated forms of ATG8 proteins during macroautophagy. Also involved in non-canonical autophagy, a parallel pathway involving conjugation of ATG8 proteins to single membranes at endolysosomal compartments, by catalyzing delipidation of ATG8 proteins conjugated to phosphatidylserine (PS). The protein is Cysteine protease ATG4B of Gallus gallus (Chicken).